A 127-amino-acid chain; its full sequence is Promotilin (127 aa).

An N-terminal signal peptide occupies residues 1–25; the sequence is MLSRKAVAALLLVHVTAMLASQTEG. Residues 41–67 form a disordered region; it reads REQNKRLRKSLRVQQRSKAAGRLEPQE.

The protein belongs to the motilin family. Present in the gut mucosa with the exception of the gastric corpus. Also present in medulla oblongata, nucleus of the solitary tract, hypophysis, spinal cord, hypothalamus, and cerebellum but not in the cerebral cortex.

It is found in the secreted. Functionally, plays an important role in the regulation of interdigestive gastrointestinal motility and indirectly causes rhythmic contraction of duodenal and colonic smooth muscle. This is Promotilin (MLN) from Cavia porcellus (Guinea pig).